Here is a 37-residue protein sequence, read N- to C-terminus: Kunitz-type proteinase inhibitor AEPI-IV (37 aa).

The BPTI/Kunitz inhibitor domain occupies C6 to G37.

This sequence belongs to the venom Kunitz-type family. Sea anemone type 2 potassium channel toxin subfamily.

It is found in the secreted. The protein localises to the nematocyst. Dual-function toxin that inhibits both the serine protease trypsin and voltage-gated potassium channels (Kv). The polypeptide is Kunitz-type proteinase inhibitor AEPI-IV (Actinia equina (Beadlet anemone)).